Here is a 380-residue protein sequence, read N- to C-terminus: QRFP-like peptide receptor (380 aa).

Residues Met-1–Leu-51 are Extracellular-facing. Residues Asn-5 and Asn-21 are each glycosylated (N-linked (GlcNAc...) asparagine). A helical transmembrane segment spans residues Val-52 to Val-72. Topologically, residues Trp-73–Asn-83 are cytoplasmic. Residues Ile-84 to Thr-104 form a helical membrane-spanning segment. The Extracellular portion of the chain corresponds to Leu-105–Leu-122. A disulfide bridge connects residues Cys-120 and Cys-203. A helical membrane pass occupies residues Val-123–Ile-143. Residues Glu-144 to Ala-164 lie on the Cytoplasmic side of the membrane. The chain crosses the membrane as a helical span at residues Gly-165–Val-185. Topologically, residues His-186–Tyr-216 are extracellular. The helical transmembrane segment at Thr-217–Ile-237 threads the bilayer. Residues Arg-238 to Lys-269 are Cytoplasmic-facing. A helical transmembrane segment spans residues Met-270–Val-290. Over Met-291 to Lys-305 the chain is Extracellular. A helical membrane pass occupies residues Leu-306–Tyr-326. The Cytoplasmic portion of the chain corresponds to Ala-327–Ile-380.

It belongs to the G-protein coupled receptor 1 family.

The protein localises to the cell membrane. Its function is as follows. Receptor for QRFP-like peptide. The activity of this receptor is mediated by G proteins which activate a phosphatidyl-inositol-calcium second messenger system. This is QRFP-like peptide receptor from Branchiostoma floridae (Florida lancelet).